We begin with the raw amino-acid sequence, 322 residues long: Quinolinate synthase (322 aa).

Iminosuccinate is bound by residues His-38 and Ser-55. Cys-100 lines the [4Fe-4S] cluster pocket. Residues 126–128 (YIN) and Ser-143 each bind iminosuccinate. Cys-186 is a binding site for [4Fe-4S] cluster. Iminosuccinate is bound by residues 212–214 (HPE) and Thr-229. Cys-279 provides a ligand contact to [4Fe-4S] cluster.

This sequence belongs to the quinolinate synthase family. Type 2 subfamily. Requires [4Fe-4S] cluster as cofactor.

It localises to the cytoplasm. The enzyme catalyses iminosuccinate + dihydroxyacetone phosphate = quinolinate + phosphate + 2 H2O + H(+). Its pathway is cofactor biosynthesis; NAD(+) biosynthesis; quinolinate from iminoaspartate: step 1/1. Catalyzes the condensation of iminoaspartate with dihydroxyacetone phosphate to form quinolinate. The sequence is that of Quinolinate synthase from Aquifex aeolicus (strain VF5).